The sequence spans 243 residues: Octanoyltransferase (243 aa).

The BPL/LPL catalytic domain occupies proline 49–tryptophan 227. Substrate is bound by residues arginine 91–histidine 98, alanine 158–glycine 160, and glycine 171–alanine 173. The active-site Acyl-thioester intermediate is cysteine 189.

It belongs to the LipB family.

The protein resides in the cytoplasm. It catalyses the reaction octanoyl-[ACP] + L-lysyl-[protein] = N(6)-octanoyl-L-lysyl-[protein] + holo-[ACP] + H(+). It functions in the pathway protein modification; protein lipoylation via endogenous pathway; protein N(6)-(lipoyl)lysine from octanoyl-[acyl-carrier-protein]: step 1/2. In terms of biological role, catalyzes the transfer of endogenously produced octanoic acid from octanoyl-acyl-carrier-protein onto the lipoyl domains of lipoate-dependent enzymes. Lipoyl-ACP can also act as a substrate although octanoyl-ACP is likely to be the physiological substrate. This Prochlorococcus marinus (strain MIT 9313) protein is Octanoyltransferase.